The following is a 954-amino-acid chain: Glycine dehydrogenase (decarboxylating) (954 aa).

Position 704 is an N6-(pyridoxal phosphate)lysine (K704).

It belongs to the GcvP family. In terms of assembly, the glycine cleavage system is composed of four proteins: P, T, L and H. Pyridoxal 5'-phosphate serves as cofactor.

It carries out the reaction N(6)-[(R)-lipoyl]-L-lysyl-[glycine-cleavage complex H protein] + glycine + H(+) = N(6)-[(R)-S(8)-aminomethyldihydrolipoyl]-L-lysyl-[glycine-cleavage complex H protein] + CO2. Its function is as follows. The glycine cleavage system catalyzes the degradation of glycine. The P protein binds the alpha-amino group of glycine through its pyridoxal phosphate cofactor; CO(2) is released and the remaining methylamine moiety is then transferred to the lipoamide cofactor of the H protein. This Rhizobium etli (strain CIAT 652) protein is Glycine dehydrogenase (decarboxylating).